We begin with the raw amino-acid sequence, 589 residues long: MGGEAGERRLGRAMSFGIPDVALGLVMGFVEDPWDRDAISLVCRHWCRVDALSRKHVTVAMAYSTTPDRLFRRFPCLESLKLKAKPRAAMFNLIPEDWGGSASPWIRQLSASFHFLKALHLRRMIVSDDDLDVLVRAKAHMLSSFKLDRCSGFSTSSLALVARTCKKLETLFLEDSIIAEKENDEWIRELATNNSVLETLNFFLTDLRASPAYLTLLVRNCRRLKVLKISECFMLDLVDLFRTAEILQDFAGGSFDDQGQVEESRNYENYYFPPSLLRLSLLYMGTKEMQVLFPYGAALKKLDLQFTFLSTEDHCQLVQRCPNLEILEVRDVIGDRGLEVVAQTCKKLQRLRVERGDDDQGGLEDEHGMVTQVGLMAVAQGCPHLEYWAVHVTDITNAALEAIGTYSSSLNDFRLVLLDREANITESPLDNGVRALLRGCTKLRRFAFYVRPGALSDVGLGYIGEFSKTIRYMLLGNVGESDQGLLQLSTGCPSLQKLELRGCFFSERALAVAVLQLKSLRYLWVQGYKASPNGTDLMAMVRPFWNIEIIAPNQDEVCPDGQAQILAYYSLAGMRSDYPHSVIPLYPSV.

The region spanning 18-59 (IPDVALGLVMGFVEDPWDRDAISLVCRHWCRVDALSRKHVTV) is the F-box domain. Positions 87, 352, 414, and 501 each coordinate jasmonate.

Interacts with TIFY9/JAZ5, TIFY11C/JAZ11 and TIFY11D/JAZ12 in a coronatine-dependent manner.

Functionally, involved in jasmonate (JA) signaling. Required for jasmonate signaling in plant defense responses. Component of SCF(COI1) E3 ubiquitin ligase complexes, which may mediate the ubiquitination and subsequent proteasomal degradation of target proteins, including TIFY/JAZ family. This Oryza sativa subsp. indica (Rice) protein is Coronatine-insensitive protein homolog 2.